Consider the following 256-residue polypeptide: 5-oxoprolinase subunit A (256 aa).

It belongs to the LamB/PxpA family. Forms a complex composed of PxpA, PxpB and PxpC.

It carries out the reaction 5-oxo-L-proline + ATP + 2 H2O = L-glutamate + ADP + phosphate + H(+). Catalyzes the cleavage of 5-oxoproline to form L-glutamate coupled to the hydrolysis of ATP to ADP and inorganic phosphate. This chain is 5-oxoprolinase subunit A, found in Cutibacterium acnes (strain DSM 16379 / KPA171202) (Propionibacterium acnes).